The chain runs to 158 residues: 6,7-dimethyl-8-ribityllumazine synthase (158 aa).

5-amino-6-(D-ribitylamino)uracil is bound by residues F24, 58–60, and 82–84; these read AFE and AVI. Residue 87-88 coordinates (2S)-2-hydroxy-3-oxobutyl phosphate; sequence GT. Residue H90 is the Proton donor of the active site. F115 serves as a coordination point for 5-amino-6-(D-ribitylamino)uracil. R129 provides a ligand contact to (2S)-2-hydroxy-3-oxobutyl phosphate.

The protein belongs to the DMRL synthase family. In terms of assembly, forms an icosahedral capsid composed of 60 subunits, arranged as a dodecamer of pentamers.

The catalysed reaction is (2S)-2-hydroxy-3-oxobutyl phosphate + 5-amino-6-(D-ribitylamino)uracil = 6,7-dimethyl-8-(1-D-ribityl)lumazine + phosphate + 2 H2O + H(+). The protein operates within cofactor biosynthesis; riboflavin biosynthesis; riboflavin from 2-hydroxy-3-oxobutyl phosphate and 5-amino-6-(D-ribitylamino)uracil: step 1/2. Catalyzes the formation of 6,7-dimethyl-8-ribityllumazine by condensation of 5-amino-6-(D-ribitylamino)uracil with 3,4-dihydroxy-2-butanone 4-phosphate. This is the penultimate step in the biosynthesis of riboflavin. This Stutzerimonas stutzeri (strain A1501) (Pseudomonas stutzeri) protein is 6,7-dimethyl-8-ribityllumazine synthase.